The chain runs to 123 residues: ATP synthase epsilon chain (123 aa).

Belongs to the ATPase epsilon chain family. F-type ATPases have 2 components, CF(1) - the catalytic core - and CF(0) - the membrane proton channel. CF(1) has five subunits: alpha(3), beta(3), gamma(1), delta(1), epsilon(1). CF(0) has three main subunits: a, b and c.

The protein resides in the cell membrane. Functionally, produces ATP from ADP in the presence of a proton gradient across the membrane. The sequence is that of ATP synthase epsilon chain from Corynebacterium diphtheriae (strain ATCC 700971 / NCTC 13129 / Biotype gravis).